A 230-amino-acid chain; its full sequence is Heptaprenylglyceryl phosphate synthase (230 aa).

Residue Lys-12 coordinates sn-glycerol 1-phosphate. Positions 14 and 40 each coordinate Mg(2+). Sn-glycerol 1-phosphate-binding positions include 159-164 (YIEYSG), Gly-189, and 209-210 (GD).

This sequence belongs to the GGGP/HepGP synthase family. Group I subfamily. In terms of assembly, homodimer. Mg(2+) is required as a cofactor.

It catalyses the reaction sn-glycerol 1-phosphate + all-trans-heptaprenyl diphosphate = 3-heptaprenyl-sn-glycero-1-phosphate + diphosphate. It participates in membrane lipid metabolism; glycerophospholipid metabolism. Its function is as follows. Prenyltransferase that catalyzes in vivo the transfer of the heptaprenyl moiety of heptaprenyl pyrophosphate (HepPP; 35 carbon atoms) to the C3 hydroxyl of sn-glycerol-1-phosphate (G1P), producing heptaprenylglyceryl phosphate (HepGP). This reaction is an ether-bond-formation step in the biosynthesis of archaea-type G1P-based membrane lipids found in Bacillales. This Staphylococcus aureus (strain USA300) protein is Heptaprenylglyceryl phosphate synthase.